The primary structure comprises 1161 residues: DNA-directed RNA polymerase subunit beta (1161 aa).

The protein belongs to the RNA polymerase beta chain family. In terms of assembly, the RNAP catalytic core consists of 2 alpha, 1 beta, 1 beta' and 1 omega subunit. When a sigma factor is associated with the core the holoenzyme is formed, which can initiate transcription.

The catalysed reaction is RNA(n) + a ribonucleoside 5'-triphosphate = RNA(n+1) + diphosphate. DNA-dependent RNA polymerase catalyzes the transcription of DNA into RNA using the four ribonucleoside triphosphates as substrates. This Streptomyces avermitilis (strain ATCC 31267 / DSM 46492 / JCM 5070 / NBRC 14893 / NCIMB 12804 / NRRL 8165 / MA-4680) protein is DNA-directed RNA polymerase subunit beta.